The following is an 844-amino-acid chain: Protein translocase subunit SecA (844 aa).

Residues Q87, 105–109 (GEGKT), and D495 each bind ATP. The segment covering 783–800 (QAPPEELKQEFKHKEEPK) has biased composition (basic and acidic residues). The segment at 783–844 (QAPPEELKQE…GQKYKKCCGA (62 aa)) is disordered. The span at 802–811 (LNYSGAQKET) shows a compositional bias: polar residues. Residues 816-826 (PERRGEPKVGR) show a composition bias toward basic and acidic residues. Zn(2+) contacts are provided by C830, C832, C841, and C842.

This sequence belongs to the SecA family. In terms of assembly, monomer and homodimer. Part of the essential Sec protein translocation apparatus which comprises SecA, SecYEG and auxiliary proteins SecDF-YajC and YidC. Zn(2+) is required as a cofactor.

It localises to the cell inner membrane. The protein localises to the cytoplasm. The catalysed reaction is ATP + H2O + cellular proteinSide 1 = ADP + phosphate + cellular proteinSide 2.. Part of the Sec protein translocase complex. Interacts with the SecYEG preprotein conducting channel. Has a central role in coupling the hydrolysis of ATP to the transfer of proteins into and across the cell membrane, serving as an ATP-driven molecular motor driving the stepwise translocation of polypeptide chains across the membrane. The protein is Protein translocase subunit SecA of Nitratidesulfovibrio vulgaris (strain DSM 19637 / Miyazaki F) (Desulfovibrio vulgaris).